Here is a 96-residue protein sequence, read N- to C-terminus: Putative septation protein SpoVG (96 aa).

This sequence belongs to the SpoVG family.

In terms of biological role, could be involved in septation. This is Putative septation protein SpoVG from Clostridium kluyveri (strain ATCC 8527 / DSM 555 / NBRC 12016 / NCIMB 10680 / K1).